Here is a 269-residue protein sequence, read N- to C-terminus: Expansin-B1 (269 aa).

A signal peptide spans 1–24 (MGSLANNIMVVGAVLAALVAGGSC). N34 carries N-linked (GlcNAc...) asparagine glycosylation. The Expansin-like EG45 domain maps to 63-169 (GGACGIKNVN…RRVRCKYPAG (107 aa)). Disulfide bonds link C66-C94, C97-C164, and C102-C108. The region spanning 183–264 (NYLAVLVKYV…NWRPDAVYTS (82 aa)) is the Expansin-like CBD domain.

The protein belongs to the expansin family. Expansin B subfamily. In terms of tissue distribution, expressed in anthers and pollen.

Its subcellular location is the secreted. It is found in the cell wall. The protein localises to the membrane. Its function is as follows. May aid fertilization by loosening the cell wall of the stigma and style, thereby facilitating penetration of the pollen tube. Acts selectively on grass cell walls, which are relatively poor in pectins and xyloglucans and rich in glucuronoarabinoxylans and (1-3),(1-4)-beta-D-glucans, when compared with cell walls of other angiosperms, including other monocots. In Zea mays (Maize), this protein is Expansin-B1 (EXPB1).